A 495-amino-acid chain; its full sequence is GTPase Der (495 aa).

EngA-type G domains follow at residues 3-166 and 208-381; these read PVVA…VQDE and IKLA…SCAT. Residues 9–16, 56–60, 118–121, 214–221, 261–265, and 326–329 each bind GTP; these read GRPNVGKS, DTGGI, NKTD, DTAGV, and NKWD. Positions 382–466 constitute a KH-like domain; that stretch reads RRVSTAMLTR…PIRIQFKEGE (85 aa).

It belongs to the TRAFAC class TrmE-Era-EngA-EngB-Septin-like GTPase superfamily. EngA (Der) GTPase family. In terms of assembly, associates with the 50S ribosomal subunit.

GTPase that plays an essential role in the late steps of ribosome biogenesis. The protein is GTPase Der of Pectobacterium atrosepticum (strain SCRI 1043 / ATCC BAA-672) (Erwinia carotovora subsp. atroseptica).